The sequence spans 1492 residues: Putative leucine-rich repeat-containing protein DDB_G0290503 (1492 aa).

The PH domain occupies 2-111; the sequence is SILLEGYLEK…WIEGIKDAIK (110 aa). LRR repeat units lie at residues 123-144, 180-204, 258-284, 329-351, 352-375, 389-413, 439-462, 519-543, 551-575, 579-603, 632-656, 728-752, 806-830, 831-855, 895-919, 927-951, 955-979, 1013-1036, 1044-1068, 1138-1164, and 1210-1232; these read LDGL…IKHL, IKSL…VEKL, QESL…QFEK, KNQF…SIVD, DKLK…EIDN, ISKI…SIDK, LEKL…ILEI, INEL…NQSS, LNQL…IIER, IDQL…NESS, LDEL…NQSS, LKSL…NQDS, INEL…NESS, LIQL…IIER, LNQL…NQSS, NEKL…NESL, FENL…IIDV, LQDL…ELKE, and NAHL…GFNE. The tract at residues 1272-1292 is disordered; it reads RSSSSSLHQQQQMISPDLSNS. Low complexity predominate over residues 1274 to 1286; sequence SSSSLHQQQQMIS. LRR repeat units follow at residues 1424 to 1444 and 1445 to 1468; these read SSEK…KYFF and AIAR…IFDM.

The protein is Putative leucine-rich repeat-containing protein DDB_G0290503 of Dictyostelium discoideum (Social amoeba).